Here is a 104-residue protein sequence, read N- to C-terminus: Nucleoid-associated protein Ccon26_18480 (104 aa).

Residues aspartate 16–glycine 34 show a composition bias toward basic and acidic residues. Residues aspartate 16–glycine 38 form a disordered region.

The protein belongs to the YbaB/EbfC family. As to quaternary structure, homodimer.

The protein resides in the cytoplasm. It localises to the nucleoid. Its function is as follows. Binds to DNA and alters its conformation. May be involved in regulation of gene expression, nucleoid organization and DNA protection. The chain is Nucleoid-associated protein Ccon26_18480 from Campylobacter concisus (strain 13826).